The chain runs to 189 residues: 6,7-dimethyl-8-ribityllumazine synthase (189 aa).

5-amino-6-(D-ribitylamino)uracil-binding positions include Trp31, 65–67 (SFE), and 89–91 (CVI). 94-95 (ET) is a binding site for (2S)-2-hydroxy-3-oxobutyl phosphate. The Proton donor role is filled by His97. Phe122 is a binding site for 5-amino-6-(D-ribitylamino)uracil. Arg136 lines the (2S)-2-hydroxy-3-oxobutyl phosphate pocket.

It belongs to the DMRL synthase family.

It carries out the reaction (2S)-2-hydroxy-3-oxobutyl phosphate + 5-amino-6-(D-ribitylamino)uracil = 6,7-dimethyl-8-(1-D-ribityl)lumazine + phosphate + 2 H2O + H(+). The protein operates within cofactor biosynthesis; riboflavin biosynthesis; riboflavin from 2-hydroxy-3-oxobutyl phosphate and 5-amino-6-(D-ribitylamino)uracil: step 1/2. Its function is as follows. Catalyzes the formation of 6,7-dimethyl-8-ribityllumazine by condensation of 5-amino-6-(D-ribitylamino)uracil with 3,4-dihydroxy-2-butanone 4-phosphate. This is the penultimate step in the biosynthesis of riboflavin. The polypeptide is 6,7-dimethyl-8-ribityllumazine synthase (Flavobacterium psychrophilum (strain ATCC 49511 / DSM 21280 / CIP 103535 / JIP02/86)).